The following is a 502-amino-acid chain: UDP-N-acetylmuramate--L-alanine ligase (502 aa).

119–125 (GSHGKST) is a binding site for ATP.

This sequence belongs to the MurCDEF family.

Its subcellular location is the cytoplasm. The enzyme catalyses UDP-N-acetyl-alpha-D-muramate + L-alanine + ATP = UDP-N-acetyl-alpha-D-muramoyl-L-alanine + ADP + phosphate + H(+). It participates in cell wall biogenesis; peptidoglycan biosynthesis. Its function is as follows. Cell wall formation. This Frankia casuarinae (strain DSM 45818 / CECT 9043 / HFP020203 / CcI3) protein is UDP-N-acetylmuramate--L-alanine ligase.